An 803-amino-acid chain; its full sequence is Myb-like protein V (803 aa).

2 disordered regions span residues 237 to 333 and 429 to 803; these read SNIY…LPGL and KSTS…SRRK. A coiled-coil region spans residues 258 to 323; the sequence is DANDKNENNN…ENNKNKRTKS (66 aa). The span at 271-294 shows a compositional bias: acidic residues; it reads DDADDAAADDADDADDDDMDDESD. Low complexity predominate over residues 295–315; it reads SNNNNKNSNNKNSNNKNSNEN. The 48-residue stretch at 332–379 folds into the Myb-like domain; the sequence is GLWTDEECRSLIKAVMIIGHRWIKIKEDYYSTSKRKPSQLKDKMRSLR. 2 coiled-coil regions span residues 400-429 and 463-496; these read EIEK…SNIK and NNED…NSAV. The segment covering 429 to 438 has biased composition (polar residues); sequence KSTSNTSAAS. 2 stretches are compositionally biased toward acidic residues: residues 448-480 and 510-533; these read NDSD…DEND and EEEE…EENE. Basic residues-rich tracts occupy residues 537–553 and 568–577; these read KQKR…KKLK and HKSKLKSKPQ. Residues 573-616 are a coiled coil; sequence KSKPQRKVEKEESEKEESEEEESEEEEEEDDEDYESEEDKKKKK. A compositionally biased stretch (acidic residues) spans 586–609; the sequence is EKEESEEEESEEEEEEDDEDYESE. 2 stretches are compositionally biased toward low complexity: residues 625-636 and 666-733; these read TSTHTTTTTTTT and KKSN…PTKK. Basic and acidic residues predominate over residues 786–795; the sequence is LNKDSKENKK.

This Dictyostelium discoideum (Social amoeba) protein is Myb-like protein V (mybV).